The sequence spans 169 residues: Peptide deformylase (169 aa).

Fe cation-binding residues include Cys91 and His133. The active site involves Glu134. His137 contacts Fe cation.

The protein belongs to the polypeptide deformylase family. Requires Fe(2+) as cofactor.

The enzyme catalyses N-terminal N-formyl-L-methionyl-[peptide] + H2O = N-terminal L-methionyl-[peptide] + formate. In terms of biological role, removes the formyl group from the N-terminal Met of newly synthesized proteins. Requires at least a dipeptide for an efficient rate of reaction. N-terminal L-methionine is a prerequisite for activity but the enzyme has broad specificity at other positions. This chain is Peptide deformylase, found in Salmonella typhi.